The following is an 815-amino-acid chain: Bifunctional purine biosynthetic protein purD (815 aa).

Residues 6-452 (NILVIGSGSR…YRKDIGQKAL (447 aa)) form a GARS region. One can recognise an ATP-grasp domain in the interval 113–343 (KDFMARNNIP…LFEIVLACIE (231 aa)). 139–200 (IESLNYKIVL…EEFLDGEECS (62 aa)) is a binding site for ATP. Mg(2+) is bound by residues E313 and N315. Residues 469–801 (VSYSESGVDI…KVYKIGKIIN (333 aa)) form an AIRS region.

In the N-terminal section; belongs to the GARS family. The protein in the C-terminal section; belongs to the AIR synthase family. It depends on Mg(2+) as a cofactor. Requires Mn(2+) as cofactor.

The protein resides in the cytoplasm. It localises to the cytosol. It catalyses the reaction 5-phospho-beta-D-ribosylamine + glycine + ATP = N(1)-(5-phospho-beta-D-ribosyl)glycinamide + ADP + phosphate + H(+). It carries out the reaction 2-formamido-N(1)-(5-O-phospho-beta-D-ribosyl)acetamidine + ATP = 5-amino-1-(5-phospho-beta-D-ribosyl)imidazole + ADP + phosphate + H(+). It participates in purine metabolism; IMP biosynthesis via de novo pathway; 5-amino-1-(5-phospho-D-ribosyl)imidazole from N(2)-formyl-N(1)-(5-phospho-D-ribosyl)glycinamide: step 2/2. The protein operates within purine metabolism; IMP biosynthesis via de novo pathway; N(1)-(5-phospho-D-ribosyl)glycinamide from 5-phospho-alpha-D-ribose 1-diphosphate: step 2/2. Functionally, catalyzes the second and fifth step in the 'de novo' purine biosynthesis pathway; contains phosphoribosylamine--glycine ligase (GARS) and phosphoribosylformylglycinamidine cyclo-ligase (AIRS) activities. This chain is Bifunctional purine biosynthetic protein purD (purD), found in Dictyostelium discoideum (Social amoeba).